A 198-amino-acid chain; its full sequence is RNA-free ribonuclease P (198 aa).

It belongs to the HARP family.

The catalysed reaction is Endonucleolytic cleavage of RNA, removing 5'-extranucleotides from tRNA precursor.. RNA-free RNase P that catalyzes the removal of the 5'-leader sequence from pre-tRNA to produce the mature 5'-terminus. The sequence is that of RNA-free ribonuclease P from Nitrosococcus oceani (strain ATCC 19707 / BCRC 17464 / JCM 30415 / NCIMB 11848 / C-107).